The chain runs to 37 residues: Large ribosomal subunit protein bL36c (37 aa).

Belongs to the bacterial ribosomal protein bL36 family.

The protein resides in the plastid. It localises to the chloroplast. The sequence is that of Large ribosomal subunit protein bL36c from Jasminum nudiflorum (Winter jasmine).